Here is a 358-residue protein sequence, read N- to C-terminus: Carbamoyl phosphate synthase small chain (358 aa).

The segment at 1-172 is CPSase; that stretch reads MKAALALEDG…EAKRFESDGD (172 aa). L-glutamine contacts are provided by S45, G222, and G224. Positions 174–358 constitute a Glutamine amidotransferase type-1 domain; it reads EVVLVDCGVK…RYVDMLREYR (185 aa). C249 (nucleophile) is an active-site residue. Positions 250, 253, 291, and 294 each coordinate L-glutamine. Active-site residues include H333 and E335.

Belongs to the CarA family. As to quaternary structure, composed of two chains; the small (or glutamine) chain promotes the hydrolysis of glutamine to ammonia, which is used by the large (or ammonia) chain to synthesize carbamoyl phosphate. Tetramer of heterodimers (alpha,beta)4.

The enzyme catalyses hydrogencarbonate + L-glutamine + 2 ATP + H2O = carbamoyl phosphate + L-glutamate + 2 ADP + phosphate + 2 H(+). It carries out the reaction L-glutamine + H2O = L-glutamate + NH4(+). Its pathway is amino-acid biosynthesis; L-arginine biosynthesis; carbamoyl phosphate from bicarbonate: step 1/1. The protein operates within pyrimidine metabolism; UMP biosynthesis via de novo pathway; (S)-dihydroorotate from bicarbonate: step 1/3. Small subunit of the glutamine-dependent carbamoyl phosphate synthetase (CPSase). CPSase catalyzes the formation of carbamoyl phosphate from the ammonia moiety of glutamine, carbonate, and phosphate donated by ATP, constituting the first step of 2 biosynthetic pathways, one leading to arginine and/or urea and the other to pyrimidine nucleotides. The small subunit (glutamine amidotransferase) binds and cleaves glutamine to supply the large subunit with the substrate ammonia. The chain is Carbamoyl phosphate synthase small chain from Archaeoglobus fulgidus (strain ATCC 49558 / DSM 4304 / JCM 9628 / NBRC 100126 / VC-16).